The chain runs to 144 residues: Conopressin-conophysin (144 aa).

The N-terminal stretch at 1-27 is a signal peptide; the sequence is MTRSALQMGRLTLVLCLLLQLVLVTQA. Cysteine 28 and cysteine 33 form a disulfide bridge. Aspartate 36 is subject to Aspartic acid 1-amide. The propeptide occupies 37 to 44; it reads GERDVDGR. 7 disulfide bridges follow: cysteine 50–cysteine 90, cysteine 53–cysteine 64, cysteine 58–cysteine 80, cysteine 65–cysteine 70, cysteine 97–cysteine 117, cysteine 109–cysteine 129, and cysteine 118–cysteine 123. The propeptide occupies 131–144; sequence KESKSGIRVGCQRS.

This sequence belongs to the vasopressin/oxytocin family. In terms of tissue distribution, expressed by the venom duct.

Its subcellular location is the secreted. The chain is Conopressin-conophysin from Conus bayani (Bayan's cone).